Reading from the N-terminus, the 654-residue chain is Fimbrin-2 (654 aa).

Calponin-homology (CH) domains follow at residues 124-241 (DSEK…KIQL), 269-372 (LPPE…QHRN), 394-500 (SREE…RYNI), and 515-623 (EITD…YWTL). Actin-binding regions lie at residues 124–372 (DSEK…QHRN) and 394–623 (SREE…YWTL).

Interacts with F-actin.

The protein localises to the cytoplasm. Its subcellular location is the cytoskeleton. In terms of biological role, cross-links actin filaments (F-actin). Stabilizes and prevents F-actin depolymerization mediated by profilin. May regulate actin cytoarchitecture, cell cycle, cell division, cell elongation and cytoplasmic tractus. The protein is Fimbrin-2 of Arabidopsis thaliana (Mouse-ear cress).